The chain runs to 310 residues: Protease HtpX homolog (310 aa).

A run of 2 helical transmembrane segments spans residues 16-36 (NAVL…VDVI) and 55-75 (IFPT…VVCI). His166 serves as a coordination point for Zn(2+). Glu167 is a catalytic residue. His170 provides a ligand contact to Zn(2+). Helical transmembrane passes span 182-202 (VGIL…FFMG) and 214-234 (MILL…QMYL). Glu239 provides a ligand contact to Zn(2+).

It belongs to the peptidase M48B family. Zn(2+) is required as a cofactor.

Its subcellular location is the cell inner membrane. The sequence is that of Protease HtpX homolog from Helicobacter pylori (strain Shi470).